Consider the following 185-residue polypeptide: Elongation factor P (185 aa).

The protein belongs to the elongation factor P family.

Its subcellular location is the cytoplasm. It participates in protein biosynthesis; polypeptide chain elongation. Involved in peptide bond synthesis. Stimulates efficient translation and peptide-bond synthesis on native or reconstituted 70S ribosomes in vitro. Probably functions indirectly by altering the affinity of the ribosome for aminoacyl-tRNA, thus increasing their reactivity as acceptors for peptidyl transferase. The sequence is that of Elongation factor P from Synechococcus sp. (strain JA-3-3Ab) (Cyanobacteria bacterium Yellowstone A-Prime).